We begin with the raw amino-acid sequence, 179 residues long: Large ribosomal subunit protein uL5 (179 aa).

It belongs to the universal ribosomal protein uL5 family. In terms of assembly, part of the 50S ribosomal subunit; part of the 5S rRNA/L5/L18/L25 subcomplex. Contacts the 5S rRNA and the P site tRNA. Forms a bridge to the 30S subunit in the 70S ribosome.

This is one of the proteins that bind and probably mediate the attachment of the 5S RNA into the large ribosomal subunit, where it forms part of the central protuberance. In the 70S ribosome it contacts protein S13 of the 30S subunit (bridge B1b), connecting the 2 subunits; this bridge is implicated in subunit movement. Contacts the P site tRNA; the 5S rRNA and some of its associated proteins might help stabilize positioning of ribosome-bound tRNAs. In Synechococcus sp. (strain RCC307), this protein is Large ribosomal subunit protein uL5.